We begin with the raw amino-acid sequence, 474 residues long: Trehalose-6-phosphate synthase (474 aa).

Position 10 (Arg-10) interacts with D-glucose 6-phosphate. Gly-22–Gly-23 serves as a coordination point for UDP-alpha-D-glucose. D-glucose 6-phosphate is bound by residues Tyr-77 and Asp-131. Arg-263 and Lys-268 together coordinate UDP-alpha-D-glucose. D-glucose 6-phosphate is bound at residue Arg-301. Residues Phe-340 and Leu-366–Glu-370 contribute to the UDP-alpha-D-glucose site.

It belongs to the glycosyltransferase 20 family. As to quaternary structure, homotetramer.

It catalyses the reaction D-glucose 6-phosphate + UDP-alpha-D-glucose = alpha,alpha-trehalose 6-phosphate + UDP + H(+). Its pathway is glycan biosynthesis; trehalose biosynthesis. In terms of biological role, probably involved in the osmoprotection via the biosynthesis of trehalose. Catalyzes the transfer of glucose from UDP-alpha-D-glucose (UDP-Glc) to D-glucose 6-phosphate (Glc-6-P) to form trehalose-6-phosphate. Acts with retention of the anomeric configuration of the UDP-sugar donor. This Pseudomonas savastanoi (Pseudomonas syringae pv. savastanoi) protein is Trehalose-6-phosphate synthase.